The following is a 376-amino-acid chain: UDP-N-acetylglucosamine 2-epimerase (376 aa).

Substrate contacts are provided by residues R10, K15, D95, E117, H213, Q271, F276, 290–292 (SGG), E296, and R313.

This sequence belongs to the UDP-N-acetylglucosamine 2-epimerase family. As to quaternary structure, homodimer.

It is found in the cytoplasm. It catalyses the reaction UDP-N-acetyl-alpha-D-glucosamine = UDP-N-acetyl-alpha-D-mannosamine. It participates in bacterial outer membrane biogenesis; enterobacterial common antigen biosynthesis. Its activity is regulated as follows. Allosterically activated by its substrate, UDP-GlcNAc. Its function is as follows. Catalyzes the reversible epimerization at C-2 of UDP-N-acetylglucosamine (UDP-GlcNAc) and thereby provides bacteria with UDP-N-acetylmannosamine (UDP-ManNAc), the activated donor of ManNAc residues. Also involved in bacteriophage N4 adsorption. The polypeptide is UDP-N-acetylglucosamine 2-epimerase (Escherichia coli (strain K12)).